A 469-amino-acid polypeptide reads, in one-letter code: Glutamine synthetase (469 aa).

The GS beta-grasp domain maps to 13 to 97 (HEVKFVDLRF…IRCDILEPGT (85 aa)). A GS catalytic domain is found at 105–469 (PRSIAKRAED…PVEFELYYSV (365 aa)). Glu130 and Glu132 together coordinate Mg(2+). Residue Glu208 participates in ATP binding. Glu213 and Glu221 together coordinate Mg(2+). Residues 265–266 (NG) and Gly266 contribute to the L-glutamate site. Position 270 (His270) interacts with Mg(2+). Residues 272-274 (HMS) and Ser274 each bind ATP. Residues Arg322, Glu328, and Arg340 each coordinate L-glutamate. ATP contacts are provided by Arg340, Arg345, and Lys353. Glu358 lines the Mg(2+) pocket. Arg360 lines the L-glutamate pocket. Residue Tyr398 is modified to O-AMP-tyrosine.

The protein belongs to the glutamine synthetase family. In terms of assembly, oligomer of 12 subunits arranged in the form of two hexagons. The cofactor is Mn(2+).

The protein localises to the cytoplasm. It carries out the reaction L-glutamate + NH4(+) + ATP = L-glutamine + ADP + phosphate + H(+). Its activity is regulated as follows. When cellular nitrogen levels are high, the C-terminal adenylyl transferase (AT) of GlnE inhibits GlnA by covalent transfer of an adenylyl group from ATP to Tyr-398. Conversely, when nitrogen levels are low, the N-terminal adenylyl removase (AR) of GlnE activates GlnA by removing the adenylyl group by phosphorolysis. The fully adenylated enzyme complex is inactive. In terms of biological role, catalyzes the ATP-dependent biosynthesis of glutamine from glutamate and ammonia. This is Glutamine synthetase from Salmonella typhi.